A 123-amino-acid chain; its full sequence is Large ribosomal subunit protein uL18 (123 aa).

It belongs to the universal ribosomal protein uL18 family. Part of the 50S ribosomal subunit; part of the 5S rRNA/L5/L18/L25 subcomplex. Contacts the 5S and 23S rRNAs.

Its function is as follows. This is one of the proteins that bind and probably mediate the attachment of the 5S RNA into the large ribosomal subunit, where it forms part of the central protuberance. The polypeptide is Large ribosomal subunit protein uL18 (Wolbachia pipientis subsp. Culex pipiens (strain wPip)).